A 389-amino-acid polypeptide reads, in one-letter code: 1-deoxy-D-xylulose 5-phosphate reductoisomerase (389 aa).

The NADPH site is built by Ser11, Gly12, Ser13, Val14, Asn39, and Asn122. Lys123 provides a ligand contact to 1-deoxy-D-xylulose 5-phosphate. Glu124 serves as a coordination point for NADPH. Residue Asp148 participates in Mn(2+) binding. The 1-deoxy-D-xylulose 5-phosphate site is built by Ser149, Glu150, Ser174, and His197. Glu150 serves as a coordination point for Mn(2+). An NADPH-binding site is contributed by Gly203. Residues Ser210, Asn215, Lys216, and Glu219 each contribute to the 1-deoxy-D-xylulose 5-phosphate site. Glu219 contacts Mn(2+).

The protein belongs to the DXR family. Mg(2+) is required as a cofactor. Requires Mn(2+) as cofactor.

The enzyme catalyses 2-C-methyl-D-erythritol 4-phosphate + NADP(+) = 1-deoxy-D-xylulose 5-phosphate + NADPH + H(+). The protein operates within isoprenoid biosynthesis; isopentenyl diphosphate biosynthesis via DXP pathway; isopentenyl diphosphate from 1-deoxy-D-xylulose 5-phosphate: step 1/6. Its function is as follows. Catalyzes the NADPH-dependent rearrangement and reduction of 1-deoxy-D-xylulose-5-phosphate (DXP) to 2-C-methyl-D-erythritol 4-phosphate (MEP). The protein is 1-deoxy-D-xylulose 5-phosphate reductoisomerase of Leptospira interrogans serogroup Icterohaemorrhagiae serovar copenhageni (strain Fiocruz L1-130).